A 492-amino-acid chain; its full sequence is Ferruginol synthase (492 aa).

The chain crosses the membrane as a helical span at residues 1 to 21; the sequence is MDPFPLVAAALFIAATWFITF. C436 serves as a coordination point for heme.

This sequence belongs to the cytochrome P450 family. It depends on heme as a cofactor. In terms of tissue distribution, expressed in leaf glandular trichomes.

Its subcellular location is the membrane. The catalysed reaction is abieta-8,11,13-triene + reduced [NADPH--hemoprotein reductase] + O2 = ferruginol + oxidized [NADPH--hemoprotein reductase] + H2O + H(+). It carries out the reaction ferruginol + reduced [NADPH--hemoprotein reductase] + O2 = 11-hydroxyferruginol + oxidized [NADPH--hemoprotein reductase] + H2O + H(+). The enzyme catalyses miltiradiene + 2 reduced [NADPH--hemoprotein reductase] + 2 O2 = 11-oxomiltiradiene + 2 oxidized [NADPH--hemoprotein reductase] + 3 H2O + 2 H(+). It participates in secondary metabolite biosynthesis; terpenoid biosynthesis. In terms of biological role, monooxygenase involved in the biosynthesis of labdane-related diterpenes natural products. Catalyzes the oxidation of abietatriene to produce ferruginol. Catalyzes the oxidation of ferruginol at C-12 to produce 11-hydroxyferruginol. Ferruginol and 11-hydroxyferruginol are intermediates in the biosynthesis of carnosate, a potent antioxidant. May also convert miltiradiene into 11-oxomiltiradiene. The protein is Ferruginol synthase of Salvia fruticosa (Greek sage).